A 144-amino-acid polypeptide reads, in one-letter code: Large ribosomal subunit protein uL16 (144 aa).

Belongs to the universal ribosomal protein uL16 family. As to quaternary structure, part of the 50S ribosomal subunit.

Functionally, binds 23S rRNA and is also seen to make contacts with the A and possibly P site tRNAs. The polypeptide is Large ribosomal subunit protein uL16 (Lacticaseibacillus paracasei (strain ATCC 334 / BCRC 17002 / CCUG 31169 / CIP 107868 / KCTC 3260 / NRRL B-441) (Lactobacillus paracasei)).